Reading from the N-terminus, the 278-residue chain is MVRKLNKTYAPSTRNGTIKGQVKSARGKNLIYGKHRCGKGRNARGIITARHRGGGHKRLYRKIDFRRNKKNIYGRIITIEYDPNRNAHICLIHYRNGEKGYILHPRGTIIGDTIVSGTEVSIKIGNALPLTEMPLGTAIHNLEITRGKGGQLARAAGAVAKLIAKEGKSATLKLPSGEVRLISKNCSATVGQVGNVGVNQKSLGRAGAQRWLGKRPVVRGVVMNPVDHPHGGGEGRAPIGRKKPTTPWGYPALGRKTRKGNKYSDKFILRHRRKQQRI.

The interval 224-256 (NPVDHPHGGGEGRAPIGRKKPTTPWGYPALGRK) is disordered.

Belongs to the universal ribosomal protein uL2 family. Part of the 50S ribosomal subunit.

The protein localises to the plastid. This Cuscuta exaltata (Tall dodder) protein is Large ribosomal subunit protein uL2c (rpl2).